A 373-amino-acid chain; its full sequence is Anhydro-N-acetylmuramic acid kinase (373 aa).

Glycine 13 to aspartate 20 contacts ATP.

The protein belongs to the anhydro-N-acetylmuramic acid kinase family.

It catalyses the reaction 1,6-anhydro-N-acetyl-beta-muramate + ATP + H2O = N-acetyl-D-muramate 6-phosphate + ADP + H(+). It functions in the pathway amino-sugar metabolism; 1,6-anhydro-N-acetylmuramate degradation. Its pathway is cell wall biogenesis; peptidoglycan recycling. In terms of biological role, catalyzes the specific phosphorylation of 1,6-anhydro-N-acetylmuramic acid (anhMurNAc) with the simultaneous cleavage of the 1,6-anhydro ring, generating MurNAc-6-P. Is required for the utilization of anhMurNAc either imported from the medium or derived from its own cell wall murein, and thus plays a role in cell wall recycling. This chain is Anhydro-N-acetylmuramic acid kinase, found in Brucella abortus (strain 2308).